Reading from the N-terminus, the 312-residue chain is Gamma-soluble NSF attachment protein (312 aa).

Residues 281–312 (KKKSPATPQAKPDGAAGMAAEEEEDEYSGGLC) form a disordered region. S284 is subject to Phosphoserine. The residue at position 287 (T287) is a Phosphothreonine. Over residues 300–312 (AEEEEDEYSGGLC) the composition is skewed to acidic residues. S308 is subject to Phosphoserine.

It belongs to the SNAP family. As to quaternary structure, interacts with RAB11FIP5. Interacts with VTI1A. As to expression, abundantly expressed in the heart, liver and kidneys with lower expression in the brain, spleen, lung, muscle and testes.

The protein resides in the membrane. It localises to the golgi apparatus. Its function is as follows. Required for vesicular transport between the endoplasmic reticulum and the Golgi apparatus. The sequence is that of Gamma-soluble NSF attachment protein from Mus musculus (Mouse).